The chain runs to 467 residues: Methylenetetrahydrofolate--tRNA-(uracil-5-)-methyltransferase TrmFO (467 aa).

Residue 11–16 (GAGLAG) participates in FAD binding.

The protein belongs to the MnmG family. TrmFO subfamily. FAD serves as cofactor.

It localises to the cytoplasm. The catalysed reaction is uridine(54) in tRNA + (6R)-5,10-methylene-5,6,7,8-tetrahydrofolate + NADH + H(+) = 5-methyluridine(54) in tRNA + (6S)-5,6,7,8-tetrahydrofolate + NAD(+). The enzyme catalyses uridine(54) in tRNA + (6R)-5,10-methylene-5,6,7,8-tetrahydrofolate + NADPH + H(+) = 5-methyluridine(54) in tRNA + (6S)-5,6,7,8-tetrahydrofolate + NADP(+). Functionally, catalyzes the folate-dependent formation of 5-methyl-uridine at position 54 (M-5-U54) in all tRNAs. In Prochlorococcus marinus (strain NATL2A), this protein is Methylenetetrahydrofolate--tRNA-(uracil-5-)-methyltransferase TrmFO.